We begin with the raw amino-acid sequence, 95 residues long: Integration host factor subunit beta (95 aa).

Positions 56–76 are disordered; it reads RAPRTGRNPKTGSSVDLEGKY.

It belongs to the bacterial histone-like protein family. As to quaternary structure, heterodimer of an alpha and a beta chain.

This protein is one of the two subunits of integration host factor, a specific DNA-binding protein that functions in genetic recombination as well as in transcriptional and translational control. The chain is Integration host factor subunit beta from Shewanella baltica (strain OS223).